We begin with the raw amino-acid sequence, 868 residues long: Spindle and centriole-associated protein 1 (868 aa).

4 disordered regions span residues 129–154 (RTGF…DPGT), 172–201 (DDGG…HSNR), 229–250 (IAAQ…AEDQ), and 291–326 (KPLL…LASS). 2 stretches are compositionally biased toward polar residues: residues 190–200 (ELPNSLSPHSN) and 229–245 (IAAQ…SSEL). A Phosphothreonine modification is found at T236. At S240 the chain carries Phosphoserine. Residues 315–326 (SSSTTSADLASS) are compositionally biased toward low complexity. Residues 381–434 (RYLKESETQLRKEVETRQQLEQMLGDHRELIDALTAEILLLREENGAVQARLQQ) adopt a coiled-coil conformation. Disordered regions lie at residues 630 to 664 (PQFV…LGDG) and 702 to 722 (SSGG…NASE). Low complexity predominate over residues 634 to 649 (SLSQPPCSSPPSTQQS). The residue at position 655 (S655) is a Phosphoserine. Over residues 706 to 715 (EHGDGLREPS) the composition is skewed to basic and acidic residues. Residues 736–764 (SSMEERIAELNRQSMEARSKLLQLIEQQK) are a coiled coil. A phosphoserine mark is found at S772, S773, S776, and S831. The segment at 805 to 868 (SSKCNTVSPV…GWFALSAHLP (64 aa)) is disordered. Residues 812–831 (SPVSGVSSRRSSGAISNSCS) are compositionally biased toward low complexity.

In terms of assembly, interacts with CEP120.

Its subcellular location is the cytoplasm. It localises to the cytoskeleton. The protein localises to the microtubule organizing center. The protein resides in the centrosome. It is found in the centriole. Its subcellular location is the spindle. In terms of biological role, regulator required for centriole duplication, for proper bipolar spindle formation and chromosome congression in mitosis. The chain is Spindle and centriole-associated protein 1 (Spice1) from Rattus norvegicus (Rat).